Reading from the N-terminus, the 325-residue chain is Small ribosomal subunit protein uS3 (325 aa).

The KH type-2 domain maps to 38–106 (IRKMMSKGME…QVQLNILEVK (69 aa)). The disordered stretch occupies residues 217–325 (EALLRQQRRE…AQGAPEKAEG (109 aa)). Residues 222 to 232 (QQRRERPRRGP) show a composition bias toward basic residues. A compositionally biased stretch (low complexity) spans 285–316 (TESAAVEGTPVETPAVTPETTAAPAAVTTAEA).

It belongs to the universal ribosomal protein uS3 family. Part of the 30S ribosomal subunit. Forms a tight complex with proteins S10 and S14.

Binds the lower part of the 30S subunit head. Binds mRNA in the 70S ribosome, positioning it for translation. In Parafrankia sp. (strain EAN1pec), this protein is Small ribosomal subunit protein uS3.